Consider the following 291-residue polypeptide: tRNA U34 carboxymethyltransferase (291 aa).

Carboxy-S-adenosyl-L-methionine contacts are provided by residues Lys61, Trp75, Lys80, Gly100, Asp122 to Ser124, Val149 to Glu150, Tyr169, and Arg284.

Belongs to the class I-like SAM-binding methyltransferase superfamily. CmoB family. As to quaternary structure, homotetramer.

The catalysed reaction is carboxy-S-adenosyl-L-methionine + 5-hydroxyuridine(34) in tRNA = 5-carboxymethoxyuridine(34) in tRNA + S-adenosyl-L-homocysteine + H(+). Functionally, catalyzes carboxymethyl transfer from carboxy-S-adenosyl-L-methionine (Cx-SAM) to 5-hydroxyuridine (ho5U) to form 5-carboxymethoxyuridine (cmo5U) at position 34 in tRNAs. This chain is tRNA U34 carboxymethyltransferase, found in Campylobacter jejuni subsp. jejuni serotype O:6 (strain 81116 / NCTC 11828).